Reading from the N-terminus, the 567-residue chain is Frizzled-7 (567 aa).

The N-terminal stretch at 1-31 is a signal peptide; it reads MRPAAGEAGAGLRWLGLAALLAALLGTPCAA. The Extracellular portion of the chain corresponds to 32 to 250; sequence AHHEDKAISV…EAEVRFARLW (219 aa). The region spanning 42–161 is the FZ domain; it reads PDHGFCQPIS…HGAGEICVGQ (120 aa). Disulfide bonds link C47/C108, C55/C101, C92/C129, C118/C158, and C122/C146. N61 carries N-linked (GlcNAc...) asparagine glycosylation. An N-linked (GlcNAc...) asparagine glycan is attached at N162. The helical transmembrane segment at 251 to 271 threads the bilayer; that stretch reads VGVWSVLCCASTLFTVLTYLV. The Cytoplasmic segment spans residues 272 to 282; the sequence is DMRRFSYPERP. Residues 283–303 form a helical membrane-spanning segment; that stretch reads IIFLSGCYFMVAVAYAAGFLL. The Extracellular portion of the chain corresponds to 304 to 330; the sequence is EERVVCLERFSEDGYRTVAQGTKKEGC. The helical transmembrane segment at 331-351 threads the bilayer; sequence TILFMILYFFGMASSIWWVIL. Residues 352–373 are Cytoplasmic-facing; that stretch reads SLTWFLAAGMKWGHEAIEANSQ. A helical membrane pass occupies residues 374–394; that stretch reads YFHLAAWAVPAVKTITILAMG. The Extracellular segment spans residues 395 to 417; sequence QVDGDVLSGVCYVGIYSVDSLRG. Residues 418–438 form a helical membrane-spanning segment; sequence FVLAPLFVYLFIGTSFLLAGF. Topologically, residues 439 to 464 are cytoplasmic; sequence VSLFRIRTIMKHDGTKTEKLEKLMVR. A helical membrane pass occupies residues 465 to 485; sequence IGVFSVLYTVPATIVVACYFY. Residues 486-521 are Extracellular-facing; sequence EQAFRSTWEKTWLLQTCKTYAVPCPSHFAPMSPDFT. The helical transmembrane segment at 522–542 threads the bilayer; sequence VFMIKYLMTMIVGITTGFWIW. Residues 543–567 are Cytoplasmic-facing; the sequence is SGKTLQSWRRFYHRLSTGSKGETAV. The short motif at 545-550 is the Lys-Thr-X-X-X-Trp motif, mediates interaction with the PDZ domain of Dvl family members element; it reads KTLQSW. Positions 565-567 match the PDZ-binding motif; it reads TAV.

Belongs to the G-protein coupled receptor Fz/Smo family. In terms of tissue distribution, expressed broadly in cranial ectoderm. Also expressed in the developing somites and in other cranial placodes, including the olfactory, lens, otic placodes (lateral half of the vesicle) and epibranchial placodes. Low level of expression in all the mesoderm derivatives in the limb buds.

It localises to the cell membrane. It is found in the endosome membrane. In terms of biological role, receptor for Wnt proteins. Most of frizzled receptors are coupled to the beta-catenin canonical signaling pathway, which leads to the activation of disheveled proteins, inhibition of GSK-3 kinase, nuclear accumulation of beta-catenin and activation of Wnt target genes. A second signaling pathway involving PKC and calcium fluxes has been seen for some family members, but it is not yet clear if it represents a distinct pathway or if it can be integrated in the canonical pathway, as PKC seems to be required for Wnt-mediated inactivation of GSK-3 kinase. Both pathways seem to involve interactions with G-proteins. May be involved in transduction and intercellular transmission of polarity information during tissue morphogenesis and/or in differentiated tissues. This Gallus gallus (Chicken) protein is Frizzled-7 (FZD7).